The chain runs to 246 residues: NAD-dependent protein deacetylase (246 aa).

Residues 1–246 enclose the Deacetylase sirtuin-type domain; it reads MKMKEFLDLL…RRVMEEGGIS (246 aa). 8 residues coordinate NAD(+): Ala-22, Thr-26, Phe-33, Arg-34, Gln-98, Ile-100, Asp-101, and His-116. Phe-33 contributes to the nicotinamide binding site. Nicotinamide-binding residues include Ile-100 and Asp-101. His-116 functions as the Proton acceptor in the catalytic mechanism. Zn(2+)-binding residues include Cys-124, Cys-127, Cys-148, and Cys-151. The NAD(+) site is built by Ser-189, Ser-190, Asn-214, Leu-215, Gly-216, Asp-231, and Val-232.

This sequence belongs to the sirtuin family. Class U subfamily. The cofactor is Zn(2+).

Its subcellular location is the cytoplasm. It carries out the reaction N(6)-acetyl-L-lysyl-[protein] + NAD(+) + H2O = 2''-O-acetyl-ADP-D-ribose + nicotinamide + L-lysyl-[protein]. With respect to regulation, non-competitively inhibited by nicotinamide in vitro and in vivo, but not by nicotinic acid. Nicotinamide inhibits the deacetylation activity by reacting with a reaction intermediate. NAD-dependent protein deacetylase which modulates the activities of several enzymes which are inactive in their acetylated form. Also has depropionylation activity in vitro. Also able to ADP-ribosylate peptide substrates with Arg or Lys in the +2 position. The role of this function in vivo is not clear. The chain is NAD-dependent protein deacetylase from Thermotoga maritima (strain ATCC 43589 / DSM 3109 / JCM 10099 / NBRC 100826 / MSB8).